The sequence spans 113 residues: Transcriptional regulator RamA (113 aa).

Positions 9-107 constitute an HTH araC/xylS-type domain; it reads DTIVEWIDDN…NLPPGAYRKE (99 aa). 2 DNA-binding regions (H-T-H motif) span residues 26-47 and 74-97; these read DDIA…MQYK and VYDI…TRTF.

Its function is as follows. Transcriptional regulator. Binds to regulatory regions of target genes, including efflux pump operon acrAB and outer membrane protein gene tolC. Represses transcription of genes belonging to the flagellar regulon, including flhD, flhB and fliC; probably thereby leading to repression of motility. Represses expression of the flhDC operon in a post-transcriptional manner. Activates expression of acrAB, perhaps thereby conferring multidrug resistance. Involved in indole- and bile-mediated regulation of acrAB; binding of bile to RamA may contribute to activation of expression of acrAB. Plays a role in regulating virulence in mice. The sequence is that of Transcriptional regulator RamA from Salmonella typhimurium (strain LT2 / SGSC1412 / ATCC 700720).